The following is a 302-amino-acid chain: Glycine--tRNA ligase alpha subunit (302 aa).

This sequence belongs to the class-II aminoacyl-tRNA synthetase family. Tetramer of two alpha and two beta subunits.

It localises to the cytoplasm. The catalysed reaction is tRNA(Gly) + glycine + ATP = glycyl-tRNA(Gly) + AMP + diphosphate. This chain is Glycine--tRNA ligase alpha subunit, found in Wigglesworthia glossinidia brevipalpis.